The chain runs to 518 residues: Arrestin-related trafficking adapter 10 (518 aa).

Lys118 is covalently cross-linked (Glycyl lysine isopeptide (Lys-Gly) (interchain with G-Cter in ubiquitin)).

The protein belongs to the ART10 family. In terms of assembly, interacts with RSP5. In terms of processing, ubiquitinated by RSP5.

The protein resides in the cytoplasm. May regulate endocytosis by recruiting RSP5 ubiquitin ligase activity to specific plasma membrane proteins in response to extracellular stimuli. The protein is Arrestin-related trafficking adapter 10 (ART10) of Saccharomyces cerevisiae (strain YJM789) (Baker's yeast).